The chain runs to 325 residues: ATP synthase gamma chain (325 aa).

It belongs to the ATPase gamma chain family. F-type ATPases have 2 components, CF(1) - the catalytic core - and CF(0) - the membrane proton channel. CF(1) has five subunits: alpha(3), beta(3), gamma(1), delta(1), epsilon(1). CF(0) has three main subunits: a, b and c.

The protein resides in the cell membrane. Produces ATP from ADP in the presence of a proton gradient across the membrane. The gamma chain is believed to be important in regulating ATPase activity and the flow of protons through the CF(0) complex. This chain is ATP synthase gamma chain, found in Corynebacterium urealyticum (strain ATCC 43042 / DSM 7109).